We begin with the raw amino-acid sequence, 194 residues long: A-type ATP synthase subunit E (194 aa).

Belongs to the V-ATPase E subunit family. As to quaternary structure, has multiple subunits with at least A(3), B(3), C, D, E, F, H, I and proteolipid K(x).

It is found in the cell membrane. In terms of biological role, component of the A-type ATP synthase that produces ATP from ADP in the presence of a proton gradient across the membrane. This chain is A-type ATP synthase subunit E, found in Saccharolobus islandicus (strain M.16.27) (Sulfolobus islandicus).